Reading from the N-terminus, the 219-residue chain is Small ribosomal subunit protein uS3 (219 aa).

One can recognise a KH type-2 domain in the interval 38–107; that stretch reads IREYIENKMK…RVHINVVEVK (70 aa).

The protein belongs to the universal ribosomal protein uS3 family. In terms of assembly, part of the 30S ribosomal subunit. Forms a tight complex with proteins S10 and S14.

In terms of biological role, binds the lower part of the 30S subunit head. Binds mRNA in the 70S ribosome, positioning it for translation. This Exiguobacterium sp. (strain ATCC BAA-1283 / AT1b) protein is Small ribosomal subunit protein uS3.